The following is an 86-amino-acid chain: ATP synthase subunit c (86 aa).

The next 2 helical transmembrane spans lie at valine 8 to isoleucine 28 and threonine 64 to glycine 84.

This sequence belongs to the ATPase C chain family. In terms of assembly, F-type ATPases have 2 components, F(1) - the catalytic core - and F(0) - the membrane proton channel. F(1) has five subunits: alpha(3), beta(3), gamma(1), delta(1), epsilon(1). F(0) has three main subunits: a(1), b(2) and c(10-14). The alpha and beta chains form an alternating ring which encloses part of the gamma chain. F(1) is attached to F(0) by a central stalk formed by the gamma and epsilon chains, while a peripheral stalk is formed by the delta and b chains.

It is found in the cell membrane. In terms of biological role, f(1)F(0) ATP synthase produces ATP from ADP in the presence of a proton or sodium gradient. F-type ATPases consist of two structural domains, F(1) containing the extramembraneous catalytic core and F(0) containing the membrane proton channel, linked together by a central stalk and a peripheral stalk. During catalysis, ATP synthesis in the catalytic domain of F(1) is coupled via a rotary mechanism of the central stalk subunits to proton translocation. Functionally, key component of the F(0) channel; it plays a direct role in translocation across the membrane. A homomeric c-ring of between 10-14 subunits forms the central stalk rotor element with the F(1) delta and epsilon subunits. The protein is ATP synthase subunit c of Lachnoclostridium phytofermentans (strain ATCC 700394 / DSM 18823 / ISDg) (Clostridium phytofermentans).